The sequence spans 757 residues: RNA-directed RNA polymerase catalytic subunit (757 aa).

A disordered region spans residues 50 to 82 (SERGRWTKNTETGAPQLNPIDGPLPEDNEPSGY). 2 consecutive short sequence motifs (nuclear localization signal) follow at residues 187–195 (RKRRVRDNV) and 203–216 (RTIG…DKRS). A promoter-binding site region spans residues 249–256 (RGFVYFVE). The 198-residue stretch at 286–483 (VRKMMTNSQD…GINMSKKKSY (198 aa)) folds into the RdRp catalytic domain.

It belongs to the influenza viruses polymerase PB1 family. As to quaternary structure, influenza RNA polymerase is composed of three subunits: PB1, PB2 and PA. Interacts (via N-terminus) with PA (via C-terminus). Interacts (via C-terminus) with PB2 (via N-terminus); this interaction is essential for transcription initiation. Interacts (via C-terminus) with human PKP2 (via N-terminus); the interaction competitively inhibits the interaction between the RNA polymerase subunits PB1 and PB2. In terms of processing, phosphorylated by host PRKCA.

The protein resides in the host nucleus. The protein localises to the host cytoplasm. The enzyme catalyses RNA(n) + a ribonucleoside 5'-triphosphate = RNA(n+1) + diphosphate. In terms of biological role, RNA-dependent RNA polymerase which is responsible for replication and transcription of virus RNA segments. The transcription of viral mRNAs occurs by a unique mechanism called cap-snatching. 5' methylated caps of cellular mRNAs are cleaved after 10-13 nucleotides by PA. In turn, these short capped RNAs are used as primers by PB1 for transcription of viral mRNAs. During virus replication, PB1 initiates RNA synthesis and copy vRNA into complementary RNA (cRNA) which in turn serves as a template for the production of more vRNAs. The sequence is that of RNA-directed RNA polymerase catalytic subunit from Aves (Human).